Reading from the N-terminus, the 359-residue chain is Peptide chain release factor 1 (359 aa).

An N5-methylglutamine modification is found at Gln-235. Residues 283-294 are compositionally biased toward basic and acidic residues; it reads SKADEERSESRK. Residues 283-309 are disordered; sequence SKADEERSESRKSQVGSGDRSERIRTY.

This sequence belongs to the prokaryotic/mitochondrial release factor family. Methylated by PrmC. Methylation increases the termination efficiency of RF1.

Its subcellular location is the cytoplasm. Peptide chain release factor 1 directs the termination of translation in response to the peptide chain termination codons UAG and UAA. The chain is Peptide chain release factor 1 from Mesorhizobium japonicum (strain LMG 29417 / CECT 9101 / MAFF 303099) (Mesorhizobium loti (strain MAFF 303099)).